A 326-amino-acid polypeptide reads, in one-letter code: tRNA uridine(34) hydroxylase (326 aa).

The Rhodanese domain maps to 123-217 (SDPDVLLVDT…YLEEVPEENS (95 aa)). C177 acts as the Cysteine persulfide intermediate in catalysis. The segment covering 276–320 (EEQKSRFREREKQVQLANERGETHVGGDAAKLIEQRKQEKKEKKQ) has biased composition (basic and acidic residues). The disordered stretch occupies residues 276–326 (EEQKSRFREREKQVQLANERGETHVGGDAAKLIEQRKQEKKEKKQQQRSSK).

This sequence belongs to the TrhO family.

It catalyses the reaction uridine(34) in tRNA + AH2 + O2 = 5-hydroxyuridine(34) in tRNA + A + H2O. Functionally, catalyzes oxygen-dependent 5-hydroxyuridine (ho5U) modification at position 34 in tRNAs. This is tRNA uridine(34) hydroxylase from Aliivibrio salmonicida (strain LFI1238) (Vibrio salmonicida (strain LFI1238)).